Consider the following 339-residue polypeptide: Ketol-acid reductoisomerase (NADP(+)) (339 aa).

In terms of domain architecture, KARI N-terminal Rossmann spans 1-182 (MRVYYDRDAD…GGGRAGIIET (182 aa)). NADP(+)-binding positions include 24–27 (YGSQ), Arg-48, Ser-51, Thr-53, and 83–86 (DELQ). His-108 is a catalytic residue. Gly-134 is a binding site for NADP(+). One can recognise a KARI C-terminal knotted domain in the interval 183–328 (TFREECETDL…ARLREMMPWI (146 aa)). Mg(2+) is bound by residues Asp-191, Glu-195, Glu-227, and Glu-231. Ser-252 serves as a coordination point for substrate.

This sequence belongs to the ketol-acid reductoisomerase family. It depends on Mg(2+) as a cofactor.

It carries out the reaction (2R)-2,3-dihydroxy-3-methylbutanoate + NADP(+) = (2S)-2-acetolactate + NADPH + H(+). The catalysed reaction is (2R,3R)-2,3-dihydroxy-3-methylpentanoate + NADP(+) = (S)-2-ethyl-2-hydroxy-3-oxobutanoate + NADPH + H(+). It functions in the pathway amino-acid biosynthesis; L-isoleucine biosynthesis; L-isoleucine from 2-oxobutanoate: step 2/4. It participates in amino-acid biosynthesis; L-valine biosynthesis; L-valine from pyruvate: step 2/4. In terms of biological role, involved in the biosynthesis of branched-chain amino acids (BCAA). Catalyzes an alkyl-migration followed by a ketol-acid reduction of (S)-2-acetolactate (S2AL) to yield (R)-2,3-dihydroxy-isovalerate. In the isomerase reaction, S2AL is rearranged via a Mg-dependent methyl migration to produce 3-hydroxy-3-methyl-2-ketobutyrate (HMKB). In the reductase reaction, this 2-ketoacid undergoes a metal-dependent reduction by NADPH to yield (R)-2,3-dihydroxy-isovalerate. The chain is Ketol-acid reductoisomerase (NADP(+)) from Parvibaculum lavamentivorans (strain DS-1 / DSM 13023 / NCIMB 13966).